The sequence spans 354 residues: UDP-N-acetylglucosamine--N-acetylmuramyl-(pentapeptide) pyrophosphoryl-undecaprenol N-acetylglucosamine transferase (354 aa).

UDP-N-acetyl-alpha-D-glucosamine contacts are provided by residues 15-17 (TGG), N127, R163, S191, I244, 263-268 (ALTVSE), and Q288.

It belongs to the glycosyltransferase 28 family. MurG subfamily.

The protein resides in the cell inner membrane. It carries out the reaction di-trans,octa-cis-undecaprenyl diphospho-N-acetyl-alpha-D-muramoyl-L-alanyl-D-glutamyl-meso-2,6-diaminopimeloyl-D-alanyl-D-alanine + UDP-N-acetyl-alpha-D-glucosamine = di-trans,octa-cis-undecaprenyl diphospho-[N-acetyl-alpha-D-glucosaminyl-(1-&gt;4)]-N-acetyl-alpha-D-muramoyl-L-alanyl-D-glutamyl-meso-2,6-diaminopimeloyl-D-alanyl-D-alanine + UDP + H(+). Its pathway is cell wall biogenesis; peptidoglycan biosynthesis. Its function is as follows. Cell wall formation. Catalyzes the transfer of a GlcNAc subunit on undecaprenyl-pyrophosphoryl-MurNAc-pentapeptide (lipid intermediate I) to form undecaprenyl-pyrophosphoryl-MurNAc-(pentapeptide)GlcNAc (lipid intermediate II). In Serratia proteamaculans (strain 568), this protein is UDP-N-acetylglucosamine--N-acetylmuramyl-(pentapeptide) pyrophosphoryl-undecaprenol N-acetylglucosamine transferase.